The chain runs to 160 residues: Transcriptional repressor NrdR (160 aa).

A zinc finger lies at 3-34; it reads CPSCQNTDSRVLESRAADGGRSVRRRRECLNC. An ATP-cone domain is found at 49-139; it reads ITVIKRNGNR…VYRQFRGIDD (91 aa).

Belongs to the NrdR family. Zn(2+) is required as a cofactor.

Its function is as follows. Negatively regulates transcription of bacterial ribonucleotide reductase nrd genes and operons by binding to NrdR-boxes. This chain is Transcriptional repressor NrdR, found in Synechococcus sp. (strain CC9605).